The primary structure comprises 291 residues: Small ribosomal subunit protein uS2 (291 aa).

The tract at residues Leu-256–Val-291 is disordered. The span at Thr-261–Val-291 shows a compositional bias: low complexity.

Belongs to the universal ribosomal protein uS2 family.

The sequence is that of Small ribosomal subunit protein uS2 from Frankia alni (strain DSM 45986 / CECT 9034 / ACN14a).